The following is a 315-amino-acid chain: Methionyl-tRNA formyltransferase (315 aa).

113–116 (SLLP) contributes to the (6S)-5,6,7,8-tetrahydrofolate binding site.

The protein belongs to the Fmt family.

It catalyses the reaction L-methionyl-tRNA(fMet) + (6R)-10-formyltetrahydrofolate = N-formyl-L-methionyl-tRNA(fMet) + (6S)-5,6,7,8-tetrahydrofolate + H(+). In terms of biological role, attaches a formyl group to the free amino group of methionyl-tRNA(fMet). The formyl group appears to play a dual role in the initiator identity of N-formylmethionyl-tRNA by promoting its recognition by IF2 and preventing the misappropriation of this tRNA by the elongation apparatus. This Shigella dysenteriae serotype 1 (strain Sd197) protein is Methionyl-tRNA formyltransferase.